Consider the following 234-residue polypeptide: Sugar fermentation stimulation protein homolog (234 aa).

The protein belongs to the SfsA family.

The protein is Sugar fermentation stimulation protein homolog of Shewanella piezotolerans (strain WP3 / JCM 13877).